The primary structure comprises 230 residues: MSQTPEQIIAIVPAAGIGSRMGAEIPKQYLQLNEQSILSHTLDCLLSHPDIDKVIVALNPADNYFAKLPQVKHPKLECVIGGKERADSVLSGLKIAEAGAWALVHDAARPCLTHRDIDKLIASVNEFPQGAILAAPVRDTMKRTDEKGLISETVCRERLWHALTPQYFPVSSLMQNLTDALAAGALITDEASAMEWAGVMPGIVSGRADNIKVTHPDDLQLASLFLKNAV.

Belongs to the IspD/TarI cytidylyltransferase family. IspD subfamily.

It carries out the reaction 2-C-methyl-D-erythritol 4-phosphate + CTP + H(+) = 4-CDP-2-C-methyl-D-erythritol + diphosphate. Its pathway is isoprenoid biosynthesis; isopentenyl diphosphate biosynthesis via DXP pathway; isopentenyl diphosphate from 1-deoxy-D-xylulose 5-phosphate: step 2/6. In terms of biological role, catalyzes the formation of 4-diphosphocytidyl-2-C-methyl-D-erythritol from CTP and 2-C-methyl-D-erythritol 4-phosphate (MEP). This chain is 2-C-methyl-D-erythritol 4-phosphate cytidylyltransferase, found in Shewanella halifaxensis (strain HAW-EB4).